The primary structure comprises 368 residues: Putative phospho-2-dehydro-3-deoxyheptonate aldolase (368 aa).

Belongs to the class-I DAHP synthase family.

The enzyme catalyses D-erythrose 4-phosphate + phosphoenolpyruvate + H2O = 7-phospho-2-dehydro-3-deoxy-D-arabino-heptonate + phosphate. Its pathway is metabolic intermediate biosynthesis; chorismate biosynthesis; chorismate from D-erythrose 4-phosphate and phosphoenolpyruvate: step 1/7. Functionally, stereospecific condensation of phosphoenolpyruvate (PEP) and D-erythrose-4-phosphate (E4P) giving rise to 3-deoxy-D-arabino-heptulosonate-7-phosphate (DAHP). The polypeptide is Putative phospho-2-dehydro-3-deoxyheptonate aldolase (Schizosaccharomyces pombe (strain 972 / ATCC 24843) (Fission yeast)).